A 262-amino-acid polypeptide reads, in one-letter code: Global transcriptional regulator CodY (262 aa).

The interval 1–159 (MATLLEKTRK…ATTVIGVQLS (159 aa)) is GAF domain. Residues 207–226 (ASVIADKIGITRSVIVNALR) constitute a DNA-binding region (H-T-H motif).

It belongs to the CodY family.

It localises to the cytoplasm. Its function is as follows. DNA-binding global transcriptional regulator which is involved in the adaptive response to starvation and acts by directly or indirectly controlling the expression of numerous genes in response to nutrient availability. During rapid exponential growth, CodY is highly active and represses genes whose products allow adaptation to nutrient depletion. The sequence is that of Global transcriptional regulator CodY from Lactococcus lactis subsp. cremoris (strain SK11).